A 159-amino-acid chain; its full sequence is Transcription elongation factor GreA (159 aa).

A coiled-coil region spans residues 47 to 77 (SENAEYDAARDKQATIENEITEIQHILDNYE).

Belongs to the GreA/GreB family.

Its function is as follows. Necessary for efficient RNA polymerase transcription elongation past template-encoded arresting sites. The arresting sites in DNA have the property of trapping a certain fraction of elongating RNA polymerases that pass through, resulting in locked ternary complexes. Cleavage of the nascent transcript by cleavage factors such as GreA or GreB allows the resumption of elongation from the new 3'terminus. GreA releases sequences of 2 to 3 nucleotides. The polypeptide is Transcription elongation factor GreA (Metamycoplasma arthritidis (strain 158L3-1) (Mycoplasma arthritidis)).